Reading from the N-terminus, the 297-residue chain is Counting factor 45-1 (297 aa).

An N-terminal signal peptide occupies residues M1 to A20. The region spanning I24–S235 is the Ch-type lysozyme domain. Catalysis depends on residues D29, D119, and E121. A glycan (N-linked (GlcNAc...) asparagine) is linked at N166. Residues S231–S296 form an S-G-S motif repeats region. Residues S231–S297 form a disordered region. A compositionally biased stretch (low complexity) spans G234 to G275. The segment covering S276–S297 has biased composition (gly residues).

The protein belongs to the glycosyl hydrolase 25 family. Monomer. Component of the counting factor (CF) complex, which includes cf60, cf50, cf45-1 and ctnA.

Its subcellular location is the secreted. Functionally, cell-counting factor that limits the maximum size of the multicellular structure during aggregation. In Dictyostelium discoideum (Social amoeba), this protein is Counting factor 45-1 (cf45-1).